The primary structure comprises 1687 residues: Muscle calcium channel subunit alpha-1 (1687 aa).

Residues 1-33 (MDDAVCPTETDNVQNKQKATTPKRTQRRGGKQQ) form a disordered region. Residues 1 to 61 (MDDAVCPTET…IFCIKIVDSK (61 aa)) lie on the Cytoplasmic side of the membrane. Residues 9-23 (ETDNVQNKQKATTPK) are compositionally biased toward polar residues. The I repeat unit spans residues 48–330 (NPLRIFCIKI…LILGVLSGEF (283 aa)). The helical transmembrane segment at 62–80 (LFEYFILLTIFANCVALAV) threads the bilayer. Over 81 to 99 (YTPYPSGDSNITNQMLEKI) the chain is Extracellular. N-linked (GlcNAc...) asparagine glycosylation occurs at asparagine 90. The helical transmembrane segment at 100–117 (EYIFLVIFTSECVMKIIA) threads the bilayer. At 118–130 (YGFVLHTGSYLRN) the chain is on the cytoplasmic side. A helical transmembrane segment spans residues 131 to 145 (GWNFLDFFIVVIGMI). Residues 146 to 157 (STALSNLVKEGF) are Extracellular-facing. Residues 158 to 176 (DVKALRAFRVLRPLRLVSG) traverse the membrane as a helical segment. The Cytoplasmic portion of the chain corresponds to 177–196 (VPSLQVVLNSILKAMIPLLH). The chain crosses the membrane as a helical span at residues 197–216 (IALLVLFVIIIYAIIGLELF). Residues 217–302 (SGKLHKTCRH…SIQDAMGSSW (86 aa)) are Extracellular-facing. Glutamate 285 contributes to the Ca(2+) binding site. Residues 303–327 (EWIYFVSMVILGAFFVMNLILGVLS) form a helical membrane-spanning segment. The Cytoplasmic portion of the chain corresponds to 328–434 (GEFSKERTKA…RACRKAVKSQ (107 aa)). One copy of the II repeat lies at 420 to 667 (NRRIRRACRK…VFLAIAVDNL (248 aa)). The helical transmembrane segment at 435 to 454 (AFYWLIILLVFLNTGVLATE) threads the bilayer. Topologically, residues 455–467 (HYRQPIWLDQFQE) are extracellular. The chain crosses the membrane as a helical span at residues 468–487 (YTNIFFIALFTCEMILKMYS). At 488-496 (LGFQGYFVS) the chain is on the cytoplasmic side. A helical transmembrane segment spans residues 497 to 515 (LFNRFDCFVVIGSISEMVL). The Extracellular portion of the chain corresponds to 516 to 525 (TSSELMAPLG). A helical membrane pass occupies residues 526-544 (VSVLRCVRLLRVFKVTKYW). Residues 545-563 (HSLSNLVASLLNSIQSIAS) are Cytoplasmic-facing. The chain crosses the membrane as a helical span at residues 564 to 583 (LLLLLFLFIVIFGLLGMQVF). At 584–639 (GGRFTFKPEEEKPRSNFDSFYQSLLTVFQILTGEDWNVVMYDGIRAYGGVFSFGIV) the chain is on the extracellular side. Glutamate 617 serves as a coordination point for Ca(2+). A helical membrane pass occupies residues 640–664 (ACIYYIILFICGNYILLNVFLAIAV). Residues 665-785 (DNLADADSLS…TNRFRIFCHR (121 aa)) lie on the Cytoplasmic side of the membrane. An III repeat occupies 777 to 1059 (NRFRIFCHRL…IFVGFVIVTF (283 aa)). A helical membrane pass occupies residues 786-809 (LCNHSNFGNFILCCIMFSSAMLAA). Topologically, residues 810–826 (ENPLKADASRNIVLNKF) are extracellular. Residues 827–846 (DYFFTAVFTIELVLKLISYG) form a helical membrane-spanning segment. At 847–854 (FVLHDGAF) the chain is on the cytoplasmic side. The helical transmembrane segment at 855–877 (CRSAFNLLDLLVVCVSLISIFFN) threads the bilayer. Over 878 to 885 (SNAISVVK) the chain is Extracellular. A helical membrane pass occupies residues 886–900 (ILRVLRVLRPLRAIN). Residues 901–921 (RAKGLKHVVQCVIVAVKTIGN) lie on the Cytoplasmic side of the membrane. The chain crosses the membrane as a helical span at residues 922-941 (IVLVTCLLQFMFAVIGVQLF). Residues 942–1030 (KGKFFSCSDG…NGGPIYNFRP (89 aa)) lie on the Extracellular side of the membrane. Residues 979-1068 (REWKNNKFHF…FQNEGEQEYK (90 aa)) are dihydropyridine binding. A Ca(2+)-binding site is contributed by glutamate 1005. Residues 1031–1055 (IVAAYYIIYIIIIAFFMVNIFVGFV) traverse the membrane as a helical segment. The Cytoplasmic segment spans residues 1056–1110 (IVTFQNEGEQEYKNCELDKNQRNCIEFALKAKPVRRYIPKHSIQYKVWWFVTSSS). One copy of the IV repeat lies at 1096–1370 (HSIQYKVWWF…LFVAVIMDNF (275 aa)). The chain crosses the membrane as a helical span at residues 1111–1129 (FEYSIFVLIMINTVTLAMK). Topologically, residues 1130-1143 (FYKQPEYYSEILDA) are extracellular. The helical transmembrane segment at 1144–1163 (LNMIFTAVFSLEFIFKLAAF) threads the bilayer. Over 1164-1172 (RFKNYFGDA) the chain is Cytoplasmic. The chain crosses the membrane as a helical span at residues 1173–1191 (WNTFDFIIVLGSFIDIVYS). Residues 1192-1219 (EIKTKEQALATCDGQSCNKAKGGSTLIS) are Extracellular-facing. A helical membrane pass occupies residues 1220–1238 (INFFRLFRVMRLVKLLSKG). Residues 1239-1257 (EGIRTLLWTFIKSFQALPY) lie on the Cytoplasmic side of the membrane. Residues 1258–1277 (VALLIVMLFFIYAVIGMQVF) traverse the membrane as a helical segment. Residues 1278 to 1343 (GKIMLEEGTS…AVNNCGSSIA (66 aa)) are Extracellular-facing. A dihydropyridine binding region spans residues 1327-1389 (KCDPESDAVN…LGPHHLDEFI (63 aa)). Residues 1337-1378 (NCGSSIAFPYFISFYVLCSFLIINLFVAVIMDNFDYLTRDWS) form a phenylalkylamine binding region. Residues 1344 to 1362 (FPYFISFYVLCSFLIINLF) form a helical membrane-spanning segment. Over 1363-1687 (VAVIMDNFDY…PKSKDKDEEF (325 aa)) the chain is Cytoplasmic.

Belongs to the calcium channel alpha-1 subunit (TC 1.A.1.11) family. As to expression, predominantly expressed in the larval body wall musculature. In adults, highest expression in thorax followed by head and at a lower extent by abdomen.

The protein resides in the membrane. Its function is as follows. Voltage-sensitive calcium channels (VSCC) mediate the entry of calcium ions into excitable cells and are also involved in a variety of calcium-dependent processes, including muscle contraction, hormone or neurotransmitter release, gene expression, cell motility, cell division and cell death. MDL-alpha1 encodes a dihydropyridine- and diltiazem-sensitive current in larval body wall muscle. In Musca domestica (House fly), this protein is Muscle calcium channel subunit alpha-1.